The primary structure comprises 190 residues: Voltage-dependent calcium channel gamma-like subunit (190 aa).

Transmembrane regions (helical) follow at residues 25–45, 96–116, 131–151, and 155–175; these read FIRT…SVSI, ALAV…QLCE, LLVS…LLRN, and LIGF…LFLN.

This sequence belongs to the PMP-22/EMP/MP20 family. CACNG subfamily. As to quaternary structure, the L-type calcium channel is composed of five subunits: alpha-1, alpha-2/delta, beta and gamma.

The protein resides in the membrane. Its function is as follows. Thought to stabilize the calcium channel in an inactivated (closed) state. Modulates calcium current when coexpressed with CACNA1G. This chain is Voltage-dependent calcium channel gamma-like subunit, found in Homo sapiens (Human).